The following is a 384-amino-acid chain: MHSSGSSFAKAGHEPGPPLWLLAELTYRCPLQCPYCSNPLDFAKQGAELSTAEWIEVFRQARELGAAQLGFSGGEPLVRQDLAELIAAARGLGYYTNLITSGIGLTEARIAEFADAGLDHIQISFQAADEEVNNLLAGSKKAFAQKLAMARAVKAHGYPMVLNFVTHRHNIDNIERIIELCLELEADFVELATCQFYGWAELNRAGLLPTRAQLERAERITNQWRDKLAAENHPCKLIFVTPDYYEERPKACMNGWGNLFLDITPDGTALPCHSARQLPVQFPNVREHSVEHIWRHSFGFNRFRGDDWMPEPCRSCDEKHKDFGGCRCQAFMLTGDASNADPVCSKSAHHEVILAARRQADEAPLGLGELQYRNDKASRIICKA.

One can recognise a Radical SAM core domain in the interval 15 to 231 (PGPPLWLLAE…NQWRDKLAAE (217 aa)). [4Fe-4S] cluster contacts are provided by C29, C33, and C36.

This sequence belongs to the radical SAM superfamily. PqqE family. Interacts with PqqD. The interaction is necessary for activity of PqqE. [4Fe-4S] cluster serves as cofactor.

It catalyses the reaction [PQQ precursor protein] + S-adenosyl-L-methionine = E-Y cross-linked-[PQQ precursor protein] + 5'-deoxyadenosine + L-methionine + H(+). It functions in the pathway cofactor biosynthesis; pyrroloquinoline quinone biosynthesis. Catalyzes the cross-linking of a glutamate residue and a tyrosine residue in the PqqA protein as part of the biosynthesis of pyrroloquinoline quinone (PQQ). In Ectopseudomonas mendocina (strain ymp) (Pseudomonas mendocina), this protein is PqqA peptide cyclase.